Reading from the N-terminus, the 407-residue chain is Imidazolonepropionase (407 aa).

2 residues coordinate Fe(3+): His68 and His70. Residues His68 and His70 each contribute to the Zn(2+) site. Arg77, Tyr140, and His173 together coordinate 4-imidazolone-5-propanoate. Tyr140 provides a ligand contact to N-formimidoyl-L-glutamate. Residue His238 coordinates Fe(3+). Zn(2+) is bound at residue His238. Gln241 lines the 4-imidazolone-5-propanoate pocket. Asp313 contributes to the Fe(3+) binding site. Position 313 (Asp313) interacts with Zn(2+). Residues Asn315 and Gly317 each contribute to the N-formimidoyl-L-glutamate site. Thr318 contributes to the 4-imidazolone-5-propanoate binding site.

It belongs to the metallo-dependent hydrolases superfamily. HutI family. It depends on Zn(2+) as a cofactor. Fe(3+) serves as cofactor.

The protein localises to the cytoplasm. The enzyme catalyses 4-imidazolone-5-propanoate + H2O = N-formimidoyl-L-glutamate. Its pathway is amino-acid degradation; L-histidine degradation into L-glutamate; N-formimidoyl-L-glutamate from L-histidine: step 3/3. In terms of biological role, catalyzes the hydrolytic cleavage of the carbon-nitrogen bond in imidazolone-5-propanoate to yield N-formimidoyl-L-glutamate. It is the third step in the universal histidine degradation pathway. This Burkholderia cenocepacia (strain HI2424) protein is Imidazolonepropionase.